Consider the following 130-residue polypeptide: Small ribosomal subunit protein uS11 (130 aa).

This sequence belongs to the universal ribosomal protein uS11 family. In terms of assembly, part of the 30S ribosomal subunit. Interacts with proteins S7 and S18. Binds to IF-3.

Its function is as follows. Located on the platform of the 30S subunit, it bridges several disparate RNA helices of the 16S rRNA. Forms part of the Shine-Dalgarno cleft in the 70S ribosome. This chain is Small ribosomal subunit protein uS11, found in Blochmanniella floridana.